The chain runs to 196 residues: Adenine phosphoribosyltransferase (196 aa).

It belongs to the purine/pyrimidine phosphoribosyltransferase family. As to quaternary structure, homodimer.

It is found in the cytoplasm. It catalyses the reaction AMP + diphosphate = 5-phospho-alpha-D-ribose 1-diphosphate + adenine. It participates in purine metabolism; AMP biosynthesis via salvage pathway; AMP from adenine: step 1/1. Catalyzes a salvage reaction resulting in the formation of AMP, that is energically less costly than de novo synthesis. In Methylibium petroleiphilum (strain ATCC BAA-1232 / LMG 22953 / PM1), this protein is Adenine phosphoribosyltransferase.